The chain runs to 115 residues: Superoxide reductase (115 aa).

Fe cation-binding residues include E14, H16, H41, H47, C102, and H105.

It belongs to the desulfoferrodoxin family. In terms of assembly, homotetramer. Requires Fe cation as cofactor.

The catalysed reaction is reduced [rubredoxin] + superoxide + 2 H(+) = oxidized [rubredoxin] + H2O2. Its function is as follows. Uses electrons from reduced NADP, by way of rubredoxin and an oxidoreductase, to catalyze the reduction of superoxide to hydrogen peroxide. This Pyrococcus abyssi (strain GE5 / Orsay) protein is Superoxide reductase (sorA).